The chain runs to 305 residues: Glycine--tRNA ligase alpha subunit (305 aa).

It belongs to the class-II aminoacyl-tRNA synthetase family. In terms of assembly, tetramer of two alpha and two beta subunits.

It localises to the cytoplasm. The catalysed reaction is tRNA(Gly) + glycine + ATP = glycyl-tRNA(Gly) + AMP + diphosphate. The polypeptide is Glycine--tRNA ligase alpha subunit (Streptococcus pyogenes serotype M4 (strain MGAS10750)).